The chain runs to 366 residues: Ribosomal RNA large subunit methyltransferase M (366 aa).

Residues Ser-188, 221-224 (CPGG), Asp-240, Asp-260, and Asp-277 each bind S-adenosyl-L-methionine. The active-site Proton acceptor is the Lys-306.

Belongs to the class I-like SAM-binding methyltransferase superfamily. RNA methyltransferase RlmE family. RlmM subfamily. As to quaternary structure, monomer.

The protein localises to the cytoplasm. It catalyses the reaction cytidine(2498) in 23S rRNA + S-adenosyl-L-methionine = 2'-O-methylcytidine(2498) in 23S rRNA + S-adenosyl-L-homocysteine + H(+). Catalyzes the 2'-O-methylation at nucleotide C2498 in 23S rRNA. The protein is Ribosomal RNA large subunit methyltransferase M of Shigella sonnei (strain Ss046).